The primary structure comprises 215 residues: Cytidylate kinase (215 aa).

10–18 (GPAASGKGT) is an ATP binding site.

Belongs to the cytidylate kinase family. Type 1 subfamily.

The protein resides in the cytoplasm. It catalyses the reaction CMP + ATP = CDP + ADP. It carries out the reaction dCMP + ATP = dCDP + ADP. The protein is Cytidylate kinase of Bartonella henselae (strain ATCC 49882 / DSM 28221 / CCUG 30454 / Houston 1) (Rochalimaea henselae).